Consider the following 376-residue polypeptide: Glutamate 5-kinase (376 aa).

Lysine 15 serves as a coordination point for ATP. Serine 56, aspartate 143, and asparagine 155 together coordinate substrate. 175–176 (SD) lines the ATP pocket. In terms of domain architecture, PUA spans 281 to 358 (KGTLTIDAGA…PDVMMILGIT (78 aa)).

The protein belongs to the glutamate 5-kinase family.

The protein resides in the cytoplasm. It catalyses the reaction L-glutamate + ATP = L-glutamyl 5-phosphate + ADP. It functions in the pathway amino-acid biosynthesis; L-proline biosynthesis; L-glutamate 5-semialdehyde from L-glutamate: step 1/2. Its function is as follows. Catalyzes the transfer of a phosphate group to glutamate to form L-glutamate 5-phosphate. This Rhodopseudomonas palustris (strain ATCC BAA-98 / CGA009) protein is Glutamate 5-kinase.